We begin with the raw amino-acid sequence, 395 residues long: Gastric triacylglycerol lipase (395 aa).

The first 18 residues, 1–18 (MWLLLITSVISTFGGAHG), serve as a signal peptide directing secretion. Residues Asn33, Asn68, and Asn98 are each glycosylated (N-linked (GlcNAc...) asparagine). The AB hydrolase-1 domain maps to 77-376 (PVVYLQHGLI…LAYNHLDFIW (300 aa)). Catalysis depends on Ser171, which acts as the Nucleophile. A disulfide bridge links Cys245 with Cys254. Residue Asn270 is glycosylated (N-linked (GlcNAc...) asparagine). Residues Asp342 and His371 each act as charge relay system in the active site.

Belongs to the AB hydrolase superfamily. Lipase family. As to expression, secreted by the serous (von Ebner's) glands at the back of the rat tongue.

The protein localises to the secreted. It catalyses the reaction a triacylglycerol + H2O = a diacylglycerol + a fatty acid + H(+). The enzyme catalyses 1,2,3-tri-(9Z-octadecenoyl)-glycerol + H2O = 1,2-di-(9Z-octadecenoyl)-sn-glycerol + (9Z)-octadecenoate + H(+). The catalysed reaction is 1,2,3-trioctanoylglycerol + H2O = 1,2-dioctanoyl-sn-glycerol + octanoate + H(+). Functionally, catalyzes the hydrolysis of triacylglycerols to yield free fatty acids, diacylglycerol, monoacylglycerol, and glycerol. Shows a preferential hydrolysis at the sn-3 position of triacylglycerol. In Rattus norvegicus (Rat), this protein is Gastric triacylglycerol lipase (Lipf).